Consider the following 942-residue polypeptide: Alpha,alpha-trehalose-phosphate synthase [UDP-forming] 1 (942 aa).

Residues 28–57 (REKRKSNRARNPNDVAGSSENSENDLRLEG) form a disordered region. A glycosyltransferase region spans residues 92–559 (QRLLVVANRL…AETFVSELND (468 aa)). The disordered stretch occupies residues 815–892 (DMPAIARSRP…LGNSRRPSPE (78 aa)). Composition is skewed to low complexity over residues 821 to 833 (RSRP…AKSS) and 841 to 867 (SKST…NKSS). The span at 879–888 (SNHSLGNSRR) shows a compositional bias: polar residues.

In the N-terminal section; belongs to the glycosyltransferase 20 family. It in the C-terminal section; belongs to the trehalose phosphatase family. As to expression, expressed in seedlings, leaves, roots, stems, flowers and siliques.

It is found in the vacuole. Its subcellular location is the secreted. It localises to the cell wall. The protein resides in the cytoplasm. It catalyses the reaction D-glucose 6-phosphate + UDP-alpha-D-glucose = alpha,alpha-trehalose 6-phosphate + UDP + H(+). Its function is as follows. Required for normal embryo development, vegetative growth and transition to flowering. Regulates embryo growth, cell wall deposition, starch and sucrose degradation, but not cell differentiation. Involved in the regulation of glucose sensing and signaling genes during plant development. The chain is Alpha,alpha-trehalose-phosphate synthase [UDP-forming] 1 from Arabidopsis thaliana (Mouse-ear cress).